The chain runs to 67 residues: Large ribosomal subunit protein uL29 (67 aa).

Belongs to the universal ribosomal protein uL29 family.

In Sorangium cellulosum (strain So ce56) (Polyangium cellulosum (strain So ce56)), this protein is Large ribosomal subunit protein uL29.